Consider the following 242-residue polypeptide: 1-(5-phosphoribosyl)-5-[(5-phosphoribosylamino)methylideneamino] imidazole-4-carboxamide isomerase (242 aa).

Asp10 functions as the Proton acceptor in the catalytic mechanism. Asp131 (proton donor) is an active-site residue.

Belongs to the HisA/HisF family.

It is found in the cytoplasm. It carries out the reaction 1-(5-phospho-beta-D-ribosyl)-5-[(5-phospho-beta-D-ribosylamino)methylideneamino]imidazole-4-carboxamide = 5-[(5-phospho-1-deoxy-D-ribulos-1-ylimino)methylamino]-1-(5-phospho-beta-D-ribosyl)imidazole-4-carboxamide. The protein operates within amino-acid biosynthesis; L-histidine biosynthesis; L-histidine from 5-phospho-alpha-D-ribose 1-diphosphate: step 4/9. This is 1-(5-phosphoribosyl)-5-[(5-phosphoribosylamino)methylideneamino] imidazole-4-carboxamide isomerase from Bifidobacterium animalis subsp. lactis (strain AD011).